A 295-amino-acid polypeptide reads, in one-letter code: NADPH-dependent reductive aminase (295 aa).

An N-terminal signal peptide occupies residues 1–18 (MSKHIGIFGLGAMGTALA). NADP(+) is bound at residue 6–20 (GIFGLGAMGTALAAK).

Belongs to the HIBADH-related family. Homodimer. The cofactor is NADPH.

NADPH-dependent reductive aminase that catalyzes the reductive coupling of a broad set of carbonyl compounds with a variety of primary and secondary amines. Possesses remarkably high activity for the reductive amination of ketones and amines, often with high stereoselectivity and in some cases with ketone:amine ratios as low as 1:1. The cofactor NADPH, the carbonyl compound and the amine are added to the enzyme in that sequence, followed by the release of product, NADP(+) being released at last. RedAm is also able to act in the reverse, oxidative direction and exhibits activity in the dehydrogenation of amines to yield imines. The highest activity is found for 1-methyl-tetrahydroquinoline and acyclic amines are also found to be transformed. The protein is NADPH-dependent reductive aminase of Aspergillus oryzae (strain ATCC 42149 / RIB 40) (Yellow koji mold).